The primary structure comprises 323 residues: tRNA-cytidine(32) 2-sulfurtransferase (323 aa).

The short motif at 49-54 (SGGKDS) is the PP-loop motif element. 3 residues coordinate [4Fe-4S] cluster: C124, C127, and C215.

Belongs to the TtcA family. In terms of assembly, homodimer. It depends on Mg(2+) as a cofactor. [4Fe-4S] cluster serves as cofactor.

The protein resides in the cytoplasm. It catalyses the reaction cytidine(32) in tRNA + S-sulfanyl-L-cysteinyl-[cysteine desulfurase] + AH2 + ATP = 2-thiocytidine(32) in tRNA + L-cysteinyl-[cysteine desulfurase] + A + AMP + diphosphate + H(+). Its pathway is tRNA modification. Its function is as follows. Catalyzes the ATP-dependent 2-thiolation of cytidine in position 32 of tRNA, to form 2-thiocytidine (s(2)C32). The sulfur atoms are provided by the cysteine/cysteine desulfurase (IscS) system. The sequence is that of tRNA-cytidine(32) 2-sulfurtransferase from Shewanella denitrificans (strain OS217 / ATCC BAA-1090 / DSM 15013).